The primary structure comprises 229 residues: Large ribosomal subunit protein uL1 (229 aa).

Belongs to the universal ribosomal protein uL1 family. As to quaternary structure, part of the 50S ribosomal subunit.

Functionally, binds directly to 23S rRNA. The L1 stalk is quite mobile in the ribosome, and is involved in E site tRNA release. In terms of biological role, protein L1 is also a translational repressor protein, it controls the translation of the L11 operon by binding to its mRNA. In Chlorobium phaeobacteroides (strain DSM 266 / SMG 266 / 2430), this protein is Large ribosomal subunit protein uL1.